The sequence spans 464 residues: MGYDFKVKLTGERERVEDLFEYEGCKVGRGTYGHVYKAKRKDGKDDRDYALKQIEGTGISMSACREIALLRELKHPNVISLQKVFLSHADRKVWLLFDYAEHDLWHIIKFHRASKANKKPLQLPRGMVKSLLYQILDGIHYLHANWVLHRDLKPANILVMGEGPERGRVKIADMGFARLSNSPLKPLADLDPVVVTFWYRAPELLLGARHYTKAIDIWAIGCIFAELLTSEPIFHCRQEDIKTSNPYHHDQLDRIFNVMGFPADKDWEDIKKMPEHSTLMKDFRRNTYTNCSLIKYMEKHKVKPDSKAFHLLQKLLTMDPIRRITSEQAMQDPYFLEEPLPTSDVFAGCQIPYPKREFLTEEEPEDKADKKNQQQQQGNNHTNGAGHTGNPDNSHAQGPPLKKVRVVPPTATSSGLIMTSDYQRSNPHAAYQNPGPSTSLPQSSMGYSSTSQQPPQYSHQTHRY.

Residues 1-15 are interaction with CCNC; that stretch reads MGYDFKVKLTGERER. The region spanning 21–335 is the Protein kinase domain; sequence EYEGCKVGRG…SEQAMQDPYF (315 aa). Residues 27–35 and lysine 52 contribute to the ATP site; that span reads VGRGTYGHV. The active-site Proton acceptor is aspartate 151. The tract at residues 360-464 is disordered; sequence TEEEPEDKAD…PQYSHQTHRY (105 aa). The segment covering 373 to 390 has biased composition (low complexity); sequence QQQQQGNNHTNGAGHTGN. 2 stretches are compositionally biased toward polar residues: residues 410-426 and 434-446; these read TATSSGLIMTSDYQRSN and PGPSTSLPQSSMG. Over residues 447–464 the composition is skewed to low complexity; it reads YSSTSQQPPQYSHQTHRY.

The protein belongs to the protein kinase superfamily. CMGC Ser/Thr protein kinase family. CDC2/CDKX subfamily. Component of the Mediator complex. Interacts with ccnc. Mg(2+) serves as cofactor.

Its subcellular location is the nucleus. It carries out the reaction L-seryl-[protein] + ATP = O-phospho-L-seryl-[protein] + ADP + H(+). The enzyme catalyses L-threonyl-[protein] + ATP = O-phospho-L-threonyl-[protein] + ADP + H(+). It catalyses the reaction [DNA-directed RNA polymerase] + ATP = phospho-[DNA-directed RNA polymerase] + ADP + H(+). Functionally, component of the Mediator complex, a coactivator involved in regulated gene transcription of nearly all RNA polymerase II-dependent genes. Mediator functions as a bridge to convey information from gene-specific regulatory proteins to the basal RNA polymerase II transcription machinery. Mediator is recruited to promoters by direct interactions with regulatory proteins and serves as a scaffold for the assembly of a functional pre-initiation complex with RNA polymerase II and the general transcription factors. Phosphorylates the CTD (C-terminal domain) of the large subunit of RNA polymerase II (RNAp II), which may inhibit the formation of a transcription initiation complex. The polypeptide is Cyclin-dependent kinase 8 (cdk8) (Danio rerio (Zebrafish)).